Consider the following 228-residue polypeptide: AA9 family lytic polysaccharide monooxygenase A (228 aa).

His-1 and His-86 together coordinate Cu(2+). His-1 bears the Methylhistidine mark. Disulfide bonds link Cys-56–Cys-178 and Cys-97–Cys-101. Asn-138 is a glycosylation site (N-linked (GlcNAc...) asparagine). O2 contacts are provided by His-164 and Gln-173. Tyr-175 is a Cu(2+) binding site.

Belongs to the polysaccharide monooxygenase AA9 family. Cu(2+) is required as a cofactor. The catalytically essential N-terminal histidine His-22 is post-translationally modified by methylation to prevent protonation of the histidine side chain, and protect the critical active site of the enzyme from oxidative damage.

The protein localises to the secreted. The enzyme catalyses [(1-&gt;4)-beta-D-glucosyl]n+m + reduced acceptor + O2 = 4-dehydro-beta-D-glucosyl-[(1-&gt;4)-beta-D-glucosyl]n-1 + [(1-&gt;4)-beta-D-glucosyl]m + acceptor + H2O.. Small amounts of H(2)O(2) boost LPMO activity, while higher amounts lead to inactivation of the enzyme. In terms of biological role, lytic polysaccharide monooxygenase (LPMO) that depolymerizes crystalline and amorphous polysaccharides via the oxidation of scissile alpha- or beta-(1-4)-glycosidic bonds, yielding C1 and C4 oxidation product. Catalysis by LPMOs requires the reduction of the active-site copper from Cu(II) to Cu(I) by a reducing agent and H(2)O(2) or O(2) as a cosubstrate. Is able to cleave cellulose and xylan to produce C1- and C4-oxidized products. This is AA9 family lytic polysaccharide monooxygenase A from Thermoascus aurantiacus.